A 412-amino-acid polypeptide reads, in one-letter code: Multifunctional CCA protein (412 aa).

ATP-binding residues include glycine 8 and arginine 11. CTP is bound by residues glycine 8 and arginine 11. Residues aspartate 21 and aspartate 23 each coordinate Mg(2+). ATP is bound by residues arginine 91, arginine 137, and arginine 140. Residues arginine 91, arginine 137, and arginine 140 each coordinate CTP. Residues 228–329 (TGIHTLMTLS…VKLFDSIDAW (102 aa)) enclose the HD domain.

This sequence belongs to the tRNA nucleotidyltransferase/poly(A) polymerase family. Bacterial CCA-adding enzyme type 1 subfamily. In terms of assembly, monomer. Can also form homodimers and oligomers. Mg(2+) serves as cofactor. Ni(2+) is required as a cofactor.

The catalysed reaction is a tRNA precursor + 2 CTP + ATP = a tRNA with a 3' CCA end + 3 diphosphate. The enzyme catalyses a tRNA with a 3' CCA end + 2 CTP + ATP = a tRNA with a 3' CCACCA end + 3 diphosphate. Catalyzes the addition and repair of the essential 3'-terminal CCA sequence in tRNAs without using a nucleic acid template. Adds these three nucleotides in the order of C, C, and A to the tRNA nucleotide-73, using CTP and ATP as substrates and producing inorganic pyrophosphate. tRNA 3'-terminal CCA addition is required both for tRNA processing and repair. Also involved in tRNA surveillance by mediating tandem CCA addition to generate a CCACCA at the 3' terminus of unstable tRNAs. While stable tRNAs receive only 3'-terminal CCA, unstable tRNAs are marked with CCACCA and rapidly degraded. The sequence is that of Multifunctional CCA protein from Escherichia coli (strain SE11).